A 21-amino-acid polypeptide reads, in one-letter code: 23S rRNA methylase leader peptide (21 aa).

Its function is as follows. Involved in erythromycin resistance. This chain is 23S rRNA methylase leader peptide, found in Corynebacterium diphtheriae.